The sequence spans 74 residues: Small ribosomal subunit protein eS28 (74 aa).

This sequence belongs to the eukaryotic ribosomal protein eS28 family.

In Halobacterium salinarum (strain ATCC 29341 / DSM 671 / R1), this protein is Small ribosomal subunit protein eS28.